The sequence spans 349 residues: tRNA pseudouridine synthase D (349 aa).

F26 is a substrate binding site. D79 functions as the Nucleophile in the catalytic mechanism. Position 128 (N128) interacts with substrate. Residues 154–303 (GVPNYFGSQR…VDAARRAMLV (150 aa)) enclose the TRUD domain. Substrate is bound at residue F329.

This sequence belongs to the pseudouridine synthase TruD family.

The enzyme catalyses uridine(13) in tRNA = pseudouridine(13) in tRNA. Functionally, responsible for synthesis of pseudouridine from uracil-13 in transfer RNAs. In Erwinia tasmaniensis (strain DSM 17950 / CFBP 7177 / CIP 109463 / NCPPB 4357 / Et1/99), this protein is tRNA pseudouridine synthase D.